The primary structure comprises 183 residues: Ribose 1,5-bisphosphate phosphokinase PhnN (183 aa).

This sequence belongs to the ribose 1,5-bisphosphokinase family.

The enzyme catalyses alpha-D-ribose 1,5-bisphosphate + ATP = 5-phospho-alpha-D-ribose 1-diphosphate + ADP. The protein operates within metabolic intermediate biosynthesis; 5-phospho-alpha-D-ribose 1-diphosphate biosynthesis; 5-phospho-alpha-D-ribose 1-diphosphate from D-ribose 5-phosphate (route II): step 3/3. Functionally, catalyzes the phosphorylation of ribose 1,5-bisphosphate to 5-phospho-D-ribosyl alpha-1-diphosphate (PRPP). This chain is Ribose 1,5-bisphosphate phosphokinase PhnN, found in Azotobacter vinelandii (strain DJ / ATCC BAA-1303).